We begin with the raw amino-acid sequence, 212 residues long: Adenylate kinase (212 aa).

10 to 15 is a binding site for ATP; that stretch reads GSGKGT. The segment at 30 to 59 is NMP; that stretch reads STGDLMRKEINDETPLGIECARYMNEGRLV. Residues Thr31, Arg36, 57-59, and Gln90 each bind AMP; that span reads RLV. The segment at 124–161 is LID; the sequence is GRLICPKCKVSYHIISRKPKLEGICDNDGTELVRRPDD. Arg125 provides a ligand contact to ATP. The Zn(2+) site is built by Cys128 and Cys131. Residue 134–135 participates in ATP binding; it reads SY. 2 residues coordinate Zn(2+): Cys148 and Asp151. AMP contacts are provided by Arg158 and Arg169. Asn198 serves as a coordination point for ATP.

The protein belongs to the adenylate kinase family. As to quaternary structure, monomer.

Its subcellular location is the cytoplasm. The catalysed reaction is AMP + ATP = 2 ADP. It participates in purine metabolism; AMP biosynthesis via salvage pathway; AMP from ADP: step 1/1. Functionally, catalyzes the reversible transfer of the terminal phosphate group between ATP and AMP. Plays an important role in cellular energy homeostasis and in adenine nucleotide metabolism. This is Adenylate kinase from Mesoplasma florum (strain ATCC 33453 / NBRC 100688 / NCTC 11704 / L1) (Acholeplasma florum).